A 570-amino-acid polypeptide reads, in one-letter code: MTWQGWAEIALTLSLAVAIGWPLGVFLSRVWNGEKTFLDPVMRPVEGLFYKACGVDPSKSQSWHAYALALLAFNLIGFVFVYAVLRLQGVLPLNPQGFPGLSGHLAFNTAISFITNTNWQSYAGETTMSTLSQMLVLTVQNFVSAATGATVAAALARAFVANRGEGVGNFWADLVRTTLYLLLPLAFVVAVVLAALGLPQTLAAGVTAHTLEGAEQKISLYAVASQEAIKMLGINGGGIFNANSAHPFENPTPLTNLITAISINTLGWAAFFAFGRTVLAKKDVRALVIAAFVLLFAGAVGVYATETQAPPAQVAAQVDTSANMEGKEVRFGAPATAAWVAMTTGASNGSVNGKHSSLMPLGGGIAMFLMQLGEILPGGIGSGVAIMVVMALLSVFVAGLMVGRTPEYLGKKVEAREIQFSILAVVIIPLSMLGFSGIAAVLPEALKGLMHSGPHGLSEILYAYVSGTANNGSAFAGLTANAPWWNVTLGIAMAMGRFMPIVAVLAIAGSLVTKPKLAPTAGTLPTDGGLFIGLLIGVILILGGLQFFPAMALGPIVEHFQALDAVAALR.

A run of 11 helical transmembrane segments spans residues Ala7–Leu27, Ala65–Leu85, Pro95–Thr115, Leu135–Leu155, Leu179–Pro199, Leu254–Phe274, Ala286–Glu306, Gly383–Gly403, Ile422–Leu442, Leu489–Gly509, and Gly528–Phe548.

Belongs to the KdpA family. The system is composed of three essential subunits: KdpA, KdpB and KdpC.

Its subcellular location is the cell inner membrane. In terms of biological role, part of the high-affinity ATP-driven potassium transport (or Kdp) system, which catalyzes the hydrolysis of ATP coupled with the electrogenic transport of potassium into the cytoplasm. This subunit binds the periplasmic potassium ions and delivers the ions to the membrane domain of KdpB through an intramembrane tunnel. The polypeptide is Potassium-transporting ATPase potassium-binding subunit (Caulobacter vibrioides (strain ATCC 19089 / CIP 103742 / CB 15) (Caulobacter crescentus)).